Here is a 6306-residue protein sequence, read N- to C-terminus: Adhesion G-protein coupled receptor V1 (6306 aa).

Residues Met1–Gly29 form the signal peptide. Calx-beta domains are found at residues Glu30–Thr117, Val133–Lys237, Pro262–Leu362, Lys388–Leu488, Pro645–Leu745, Asp763–Ser861, Val876–Leu979, Ala993–Leu1093, Thr1108–Val1208, Ala1444–Lys1544, Thr1564–Leu1665, Thr1710–Leu1809, Ile1850–Leu1952, Thr1966–Leu2079, Gln2107–Met2206, Val2222–Thr2324, Thr2441–Ser2541, Asn2584–Val2676, Asp2689–Leu2789, Leu2814–Thr2925, Thr2947–Thr3048, and Leu3063–Phe3172. The Extracellular portion of the chain corresponds to Glu30 to Ala5908. EAR repeat units lie at residues Val3255–Gly3296, Ile3297–Ser3345, Lys3348–Gly3393, Ser3395–Gly3439, Gly3441–Met3488, and Ser3492–Ser3534. 13 Calx-beta domains span residues Asp3525–Leu3625, Ser3639–Leu3739, Gly3775–Thr3875, Ala3899–Ile4006, Val4020–Ile4123, Ile4139–Leu4239, Ala4255–Thr4354, Arg4387–Thr4489, Ser4512–Leu4612, Glu4634–Leu4734, Ser4992–Thr5095, Ala5288–Leu5332, and Ile5368–Leu5468. The 157-residue stretch at Ser5747 to Ser5903 folds into the GAIN-B domain. Disulfide bonds link Cys5856/Cys5885 and Cys5873/Cys5887. Residues Cys5856–Ser5903 form a GPS region. Residues Phe5909 to Phe5929 traverse the membrane as a helical segment. The Cytoplasmic segment spans residues Cys5930–Lys5939. A helical membrane pass occupies residues Leu5940 to Tyr5960. Over Ala5961–Tyr5979 the chain is Extracellular. Residues Leu5980–Val6000 form a helical membrane-spanning segment. Over Met6001–Tyr6010 the chain is Cytoplasmic. A helical transmembrane segment spans residues Leu6011–Ile6031. Over Leu6032 to Ala6059 the chain is Extracellular. Residues Ala6060–Ile6080 form a helical membrane-spanning segment. Over His6081–Glu6104 the chain is Cytoplasmic. Residues Ile6105–His6125 form a helical membrane-spanning segment. Topologically, residues Met6126 to Met6133 are extracellular. The chain crosses the membrane as a helical span at residues Leu6134–Ile6154. Residues Leu6155–Leu6306 are Cytoplasmic-facing. The segment at Ala6216–Ser6248 is disordered. Residues Ser6217 to Ser6240 are compositionally biased toward polar residues.

This sequence belongs to the G-protein coupled receptor 2 family. Adhesion G-protein coupled receptor (ADGR) subfamily. Forms a heterodimer, consisting of a large extracellular region (alpha subunit) non-covalently linked to a seven-transmembrane moiety (beta subunit). Component of USH2 complex, composed of ADGRV1, PDZD7, USH2A and WHRN. Interacts with USH2A and WHRN. Interacts (via the cytoplasmic region) with PDZD7. Interacts (via the cytoplasmic region) with MYO7A (via MyTH4-FERM domains). In terms of processing, autoproteolytically cleaved into 2 subunits, an extracellular alpha subunit and a seven-transmembrane subunit. Expressed at low levels in adult tissues.

The protein resides in the cell membrane. It localises to the cell projection. Its subcellular location is the stereocilium membrane. The protein localises to the photoreceptor inner segment. G-protein coupled receptor which has an essential role in the development of hearing and vision. Couples to G-alpha(i)-proteins, GNAI1/2/3, G-alpha(q)-proteins, GNAQ, as well as G-alpha(s)-proteins, GNAS, inhibiting adenylate cyclase (AC) activity and cAMP production. Required for the hair bundle ankle formation, which connects growing stereocilia in developing cochlear hair cells of the inner ear. In response to extracellular calcium, activates kinases PKA and PKC to regulate myelination by inhibiting the ubiquitination of MAG, thus enhancing the stability of this protein in myelin-forming cells of the auditory pathway. In retina photoreceptors, the USH2 complex is required for the maintenance of periciliary membrane complex that seems to play a role in regulating intracellular protein transport. Involved in the regulation of bone metabolism. In terms of biological role, cleaved ADGRV1 beta-subunit couples with G-alpha(i)-proteins, GNAI1/2/3, and constitutively inhibits adenylate cyclase (AC) activity with a stronger effect than full ADGRV1. The sequence is that of Adhesion G-protein coupled receptor V1 from Homo sapiens (Human).